The chain runs to 321 residues: MSKPIVMERGVKYRDADKMALIPVKNVVTERDALLRKPEWMKIKLPADSTRIQGIKAAMRKNGLHSVCEEASCPNLAECFNHGTATFMILGAICTRRCPFCDVAHGRPVAPDAEEPQKLAQTIADMALRYVVITSVDRDDLRDGGAQHFADCITAIRAKSPEIKIETLVPDFRGRMDRALDILNATPPDVFNHNLENVPRIYRQVRPGADYNWSLKLLERFKEAHPEIPTKSGLMVGLGETNAEIIEVMRDLRRHGVTMLTLGQYLQPSRHHLPVQRYVSPEEFDEMKAEALAMGFTHAACGPFVRSSYHADLQAKGMEVK.

Positions 68, 73, 79, 94, 98, 101, and 308 each coordinate [4Fe-4S] cluster. Residues 80–297 enclose the Radical SAM core domain; sequence FNHGTATFMI…KAEALAMGFT (218 aa).

The protein belongs to the radical SAM superfamily. Lipoyl synthase family. Requires [4Fe-4S] cluster as cofactor.

The protein resides in the cytoplasm. It catalyses the reaction [[Fe-S] cluster scaffold protein carrying a second [4Fe-4S](2+) cluster] + N(6)-octanoyl-L-lysyl-[protein] + 2 oxidized [2Fe-2S]-[ferredoxin] + 2 S-adenosyl-L-methionine + 4 H(+) = [[Fe-S] cluster scaffold protein] + N(6)-[(R)-dihydrolipoyl]-L-lysyl-[protein] + 4 Fe(3+) + 2 hydrogen sulfide + 2 5'-deoxyadenosine + 2 L-methionine + 2 reduced [2Fe-2S]-[ferredoxin]. Its pathway is protein modification; protein lipoylation via endogenous pathway; protein N(6)-(lipoyl)lysine from octanoyl-[acyl-carrier-protein]: step 2/2. Its function is as follows. Catalyzes the radical-mediated insertion of two sulfur atoms into the C-6 and C-8 positions of the octanoyl moiety bound to the lipoyl domains of lipoate-dependent enzymes, thereby converting the octanoylated domains into lipoylated derivatives. The protein is Lipoyl synthase of Salmonella paratyphi A (strain AKU_12601).